Reading from the N-terminus, the 337-residue chain is Hsp90 co-chaperone Cdc37-like 1 (337 aa).

Residues 1–11 show a composition bias toward pro residues; that stretch reads MEQPWPPPGPW. Positions 1 to 43 are disordered; that stretch reads MEQPWPPPGPWSLPRAEGEAEEESDLDLSPGSPRCPQLPGGGT. A self-association region spans residues 2-171; sequence EQPWPPPGPW…HEQKIRHFGM (170 aa). Residues Ser-32 and Ser-88 each carry the phosphoserine modification. A coiled-coil region spans residues 84–122; it reads HNSESLDQEHAKAQTAISELRQREEEWRQKEEALVQRER. A self-association and interaction with Hsp90 region spans residues 147–277; it reads KETEDEDKSK…SRVRLYSQSP (131 aa). Residues 267–337 are interaction with Hsp70; it reads KSRVRLYSQS…DDEPKMMDTV (71 aa). Positions 278-337 are required for interaction with STIP1; that stretch reads NFQPVTVQNHVPHSGVGSIGLLESLPQNPDYLQYSINTALCSLNSVVHKEDDEPKMMDTV.

This sequence belongs to the CDC37 family. Self-associates. Forms complexes with Hsp70 and Hsp90. Interacts with CDC37, FKBP4, PPID and STIP1.

It is found in the cytoplasm. Its function is as follows. Co-chaperone that binds to numerous proteins and promotes their interaction with Hsp70 and Hsp90. This is Hsp90 co-chaperone Cdc37-like 1 (CDC37L1) from Bos taurus (Bovine).